The chain runs to 140 residues: Thioredoxin H9 (140 aa).

G2 carries the N-myristoyl glycine lipid modification. The S-palmitoyl cysteine moiety is linked to residue C4. At S14 the chain carries Phosphoserine. The Thioredoxin domain occupies 25–129 (VHLITTKESW…PELQKKVTSI (105 aa)). Catalysis depends on nucleophile residues C57 and C60. C57 and C60 are oxidised to a cystine. S136 is modified (phosphoserine).

It belongs to the thioredoxin family. Plant H-type subfamily. In terms of tissue distribution, ubiquitous.

It is found in the cell membrane. Probable thiol-disulfide oxidoreductase that may play a role in intercellular communication due to its ability to move from cell to cell. The polypeptide is Thioredoxin H9 (TRX9) (Arabidopsis thaliana (Mouse-ear cress)).